The following is a 286-amino-acid chain: Probable aquaporin-3 (286 aa).

A disordered region spans residues 1-34 (MADTYGMNGHNGHVKDRRSSSMNGRNRLYAQQEP). The Cytoplasmic segment spans residues 1 to 52 (MADTYGMNGHNGHVKDRRSSSMNGRNRLYAQQEPQRTTHLSEFGKHMVAASG). The chain crosses the membrane as a helical span at residues 53 to 73 (EFVGTFLFLYFGYAGNIVAVL). Residues 74–87 (QEPISGPNGTLANN) lie on the Extracellular side of the membrane. 2 N-linked (GlcNAc...) asparagine glycosylation sites follow: asparagine 81 and asparagine 86. Residues 88 to 108 (TVMYIAMAYGFSLLVNVWTFY) form a helical membrane-spanning segment. The Cytoplasmic segment spans residues 109-135 (RISGGLFNPAVTFGLCLSGQLPWIRAL). The short motif at 116–118 (NPA) is the NPA 1 element. Residues 136–156 (FLFPSQIIAAMCAGGLVNAMF) traverse the membrane as a helical segment. Topologically, residues 157–175 (PGSASIANTTLGPNTSIAQ) are extracellular. 2 N-linked (GlcNAc...) asparagine glycosylation sites follow: asparagine 164 and asparagine 170. The chain crosses the membrane as a helical span at residues 176–196 (GVFLEMFFTAQLVFVVLMLAA). Over 197–202 (EKSRDT) the chain is Cytoplasmic. The chain crosses the membrane as a helical span at residues 203–223 (FLAPVGIGLALFVALIPGVFV). Topologically, residues 224-244 (TGGSANPVRSFGCAVGSRDFP) are extracellular. The short motif at 229 to 231 (NPV) is the NPA 2 element. Residues 245-265 (GYHWIYWVGPLLGAALAAGYF) traverse the membrane as a helical segment. Topologically, residues 266–286 (RLVKMMHYEEANPGQDSPVDV) are cytoplasmic.

It belongs to the MIP/aquaporin (TC 1.A.8) family.

It localises to the membrane. It carries out the reaction H2O(in) = H2O(out). In terms of biological role, probable water channel that may have redundant functions with FgAQP5. The protein is Probable aquaporin-3 of Gibberella zeae (strain ATCC MYA-4620 / CBS 123657 / FGSC 9075 / NRRL 31084 / PH-1) (Wheat head blight fungus).